The chain runs to 33 residues: Suppressor protein HFN40 (33 aa).

Suppresses expansion of husk leaf blades. This Zea mays (Maize) protein is Suppressor protein HFN40.